Reading from the N-terminus, the 433-residue chain is N-lysine methyltransferase SMYD2 (433 aa).

In terms of domain architecture, SET spans 7–241; the sequence is GGLERFCSPG…PGEEVFTSYI (235 aa). 17-19 is a binding site for S-adenosyl-L-methionine; it reads KGR. The Zn(2+) site is built by C52, C55, C65, C68, C74, C78, H86, and C90. The segment at 52–90 adopts an MYND-type zinc-finger fold; it reads CEYCFTRKEGLSKCGRCKQAFYCNVECQKEDWPMHKLEC. Residues H137, 206-207, and 258-260 each bind S-adenosyl-L-methionine; these read NH and YFF. Phosphoserine is present on S283.

The protein belongs to the class V-like SAM-binding methyltransferase superfamily. In terms of assembly, interacts with RNA polymerase II and HELZ. Interacts with SIN3A and HDAC1. Interacts (via MYND-type zinc finger) with EPB41L3. Interacts (via SET domain) with p53/TP53. Interacts with RB1 and HSP90AA1.

The protein resides in the cytoplasm. The protein localises to the cytosol. Its subcellular location is the nucleus. It catalyses the reaction L-lysyl(4)-[histone H3] + 3 S-adenosyl-L-methionine = N(6),N(6),N(6)-trimethyl-L-lysyl(4)-[histone H3] + 3 S-adenosyl-L-homocysteine + 3 H(+). The enzyme catalyses L-lysyl-[protein] + S-adenosyl-L-methionine = N(6)-methyl-L-lysyl-[protein] + S-adenosyl-L-homocysteine + H(+). Its function is as follows. Protein-lysine N-methyltransferase that methylates both histones and non-histone proteins, including p53/TP53 and RB1. Specifically trimethylates histone H3 'Lys-4' (H3K4me3) in vivo. The activity requires interaction with HSP90alpha. Shows even higher methyltransferase activity on p53/TP53. Monomethylates 'Lys-370' of p53/TP53, leading to decreased DNA-binding activity and subsequent transcriptional regulation activity of p53/TP53. Monomethylates RB1 at 'Lys-860'. This is N-lysine methyltransferase SMYD2 (SMYD2) from Homo sapiens (Human).